Reading from the N-terminus, the 1225-residue chain is Cytosolic carboxypeptidase 1 (1225 aa).

Residues 366-392 (DDVVDESDDNEDTDAETEAEAENEDSD) show a composition bias toward acidic residues. Residues 366 to 398 (DDVVDESDDNEDTDAETEAEAENEDSDQICKND) form a disordered region. Positions 842-1132 (YPYTYSTLKM…KFCVGLLRLK (291 aa)) constitute a Peptidase M14 domain. Residues His914, Glu917, and His1011 each contribute to the Zn(2+) site. Catalysis depends on Glu1096, which acts as the Proton donor/acceptor. A compositionally biased stretch (acidic residues) spans 1181–1193 (YSAESNDDVDPDL). A disordered region spans residues 1181 to 1225 (YSAESNDDVDPDLPENIGDFETSTLEEESFSDSEITRTHMSGQST).

It belongs to the peptidase M14 family. Zn(2+) is required as a cofactor.

It is found in the cytoplasm. It localises to the cytosol. The protein resides in the nucleus. Its subcellular location is the mitochondrion. The enzyme catalyses (L-glutamyl)(n+1)-gamma-L-glutamyl-L-glutamyl-[protein] + H2O = (L-glutamyl)(n)-gamma-L-glutamyl-L-glutamyl-[protein] + L-glutamate. It catalyses the reaction C-terminal L-alpha-aminoacyl-L-glutamyl-L-glutamyl-[tubulin] + H2O = C-terminal L-alpha-aminoacyl-L-glutamyl-[tubulin] + L-glutamate. Functionally, metallocarboxypeptidase that mediates protein deglutamylation of tubulin and non-tubulin target proteins. Catalyzes the removal of polyglutamate side chains present on the gamma-carboxyl group of glutamate residues within the C-terminal tail of alpha- and beta-tubulin. Specifically cleaves tubulin long-side-chains, while it is not able to remove the branching point glutamate. Also catalyzes the removal of polyglutamate residues from the carboxy-terminus of alpha-tubulin as well as non-tubulin proteins. This is Cytosolic carboxypeptidase 1 (agtpbp1) from Xenopus laevis (African clawed frog).